The following is a 592-amino-acid chain: Protein kinase C zeta type (592 aa).

The PB1 domain occupies 15–98 (RVRLKAHYGG…EGLIIHVFPS (84 aa)). Residues 79–145 (AFRLARQCRD…KRFNRRAYCG (67 aa)) form an interaction with SQSTM1 region. The Phorbol-ester/DAG-type zinc finger occupies 130-180 (GHLFQAKRFNRRAYCGQCSERIWGLARQGYRCINCKLLVHKRCHGLVPLTC). The Protein kinase domain maps to 252–518 (FDLIRVIGRG…FSDIKSHAFF (267 aa)). ATP-binding positions include 258–266 (IGRGSYAKV) and K281. The active-site Proton acceptor is the D376. T410 is modified (phosphothreonine; by PDPK1 and PI3K). Residues 519 to 590 (RSIDWDLLEK…INPLLLSTEE (72 aa)) form the AGC-kinase C-terminal domain. Position 560 is a phosphothreonine (T560). S591 bears the Phosphoserine mark.

The protein belongs to the protein kinase superfamily. AGC Ser/Thr protein kinase family. PKC subfamily. As to quaternary structure, forms a ternary complex with SQSTM1 and KCNAB2. Forms another ternary complex with SQSTM1 and GABRR3. Forms a complex with SQSTM1 and MAP2K5. Interacts with PARD6A, PARD6B, PARD6G and SQSTM1. Part of a complex with PARD3, PARD6A or PARD6B or PARD6G and CDC42 or RAC1. Interacts with ADAP1/CENTA1. Forms a ternary complex composed of SQSTM1 and PAWR. Interacts directly with SQSTM1. Interacts with IKBKB. Interacts (via the protein kinase domain) with WWC1. Forms a tripartite complex with WWC1 and DDR1, but predominantly in the absence of collagen. Component of the Par polarity complex, composed of at least phosphorylated PRKCZ, PARD3 and TIAM1. Interacts with PDPK1 (via N-terminal region). Interacts with WDFY2 (via WD repeats 1-3). Interacts with VAMP2. Forms a complex with WDFY2 and VAMP2. Interacts with APPL1. Interacts with WWC1, WWC2 and WWC3. CDH5 is required for its phosphorylation at Thr-410. Phosphorylated by protein kinase PDPK1; phosphorylation is inhibited by the apoptotic C-terminal cleavage product of PKN2. Phosphorylation at Thr-410 by PI3K activates the kinase. Expressed in brain, and to a lesser extent in lung, kidney and testis.

It localises to the cytoplasm. The protein resides in the endosome. It is found in the cell junction. Its subcellular location is the membrane. The catalysed reaction is L-seryl-[protein] + ATP = O-phospho-L-seryl-[protein] + ADP + H(+). The enzyme catalyses L-threonyl-[protein] + ATP = O-phospho-L-threonyl-[protein] + ADP + H(+). Its activity is regulated as follows. Atypical PKCs (PRKCI and PRKCZ) exhibit an elevated basal enzymatic activity (that may be due to the interaction with SMG1 or SQSTM1) and are not regulated by diacylglycerol, phosphatidylserine, phorbol esters or calcium ions. Two specific sites, Thr-410 (activation loop of the kinase domain) and Thr-560 (turn motif), need to be phosphorylated for its full activation. Phosphatidylinositol 3,4,5-trisphosphate might be a physiological activator. Isoform 2: Constitutively active. Calcium- and diacylglycerol-independent serine/threonine-protein kinase that functions in phosphatidylinositol 3-kinase (PI3K) pathway and mitogen-activated protein (MAP) kinase cascade, and is involved in NF-kappa-B activation, mitogenic signaling, cell proliferation, cell polarity, inflammatory response and maintenance of long-term potentiation (LTP). Upon lipopolysaccharide (LPS) treatment in macrophages, or following mitogenic stimuli, functions downstream of PI3K to activate MAP2K1/MEK1-MAPK1/ERK2 signaling cascade independently of RAF1 activation. Required for insulin-dependent activation of AKT3, but may function as an adapter rather than a direct activator. Upon insulin treatment may act as a downstream effector of PI3K and contribute to the activation of translocation of the glucose transporter SLC2A4/GLUT4 and subsequent glucose transport in adipocytes. In EGF-induced cells, binds and activates MAP2K5/MEK5-MAPK7/ERK5 independently of its kinase activity and can activate JUN promoter through MEF2C. Through binding with SQSTM1/p62, functions in interleukin-1 signaling and activation of NF-kappa-B with the specific adapters RIPK1 and TRAF6. Participates in TNF-dependent transactivation of NF-kappa-B by phosphorylating and activating IKBKB kinase, which in turn leads to the degradation of NF-kappa-B inhibitors. In migrating astrocytes, forms a cytoplasmic complex with PARD6A and is recruited by CDC42 to function in the establishment of cell polarity along with the microtubule motor and dynein. In association with FEZ1, stimulates neuronal differentiation in PC12 cells. In the inflammatory response, is required for the T-helper 2 (Th2) differentiation process, including interleukin production, efficient activation of JAK1 and the subsequent phosphorylation and nuclear translocation of STAT6. May be involved in development of allergic airway inflammation (asthma), a process dependent on Th2 immune response. In the NF-kappa-B-mediated inflammatory response, can relieve SETD6-dependent repression of NF-kappa-B target genes by phosphorylating the RELA subunit at 'Ser-311'. Phosphorylates VAMP2 in vitro. Phosphorylates and activates LRRK1, which phosphorylates RAB proteins involved in intracellular trafficking. Its function is as follows. Involved in late synaptic long term potention phase in CA1 hippocampal cells and long term memory maintenance. This chain is Protein kinase C zeta type (PRKCZ), found in Homo sapiens (Human).